A 586-amino-acid polypeptide reads, in one-letter code: Probable lysosomal cobalamin transporter (586 aa).

9 helical membrane-spanning segments follow: residues 10-30, 47-67, 96-116, 147-167, 191-211, 315-335, 378-398, 420-440, and 509-529; these read IWIA…VTTF, VVSL…IALV, IVYY…IPFA, SGFI…PAAG, ALTF…VLYT, LVGG…MLIT, IIMA…LATV, ILIA…SIAM, and VFGA…LIVL. Asn-540 carries N-linked (GlcNAc...) asparagine glycosylation.

Belongs to the LIMR family. LMBRD1 subfamily.

The protein localises to the lysosome membrane. Probable lysosomal cobalamin transporter. Required to export cobalamin from lysosomes allowing its conversion to cofactors. The polypeptide is Probable lysosomal cobalamin transporter (Pyricularia oryzae (strain 70-15 / ATCC MYA-4617 / FGSC 8958) (Rice blast fungus)).